The primary structure comprises 319 residues: Malate dehydrogenase (319 aa).

Residues 7-13 (GAAGGIG) and Asp34 contribute to the NAD(+) site. Substrate-binding residues include Arg81 and Arg87. Residues Asn94 and 117 to 119 (ITN) contribute to the NAD(+) site. The substrate site is built by Asn119 and Arg153. His177 functions as the Proton acceptor in the catalytic mechanism. An NAD(+)-binding site is contributed by Met227.

The protein belongs to the LDH/MDH superfamily. MDH type 1 family. Homodimer.

It carries out the reaction (S)-malate + NAD(+) = oxaloacetate + NADH + H(+). In terms of biological role, catalyzes the reversible oxidation of malate to oxaloacetate. This chain is Malate dehydrogenase, found in Psychromonas ingrahamii (strain DSM 17664 / CCUG 51855 / 37).